The following is a 511-amino-acid chain: 2,3-bisphosphoglycerate-independent phosphoglycerate mutase (511 aa).

Asp12 contributes to the Mn(2+) binding site. At Tyr36 the chain carries Phosphotyrosine. Ser62 is a Mn(2+) binding site. The Phosphoserine intermediate role is filled by Ser62. Substrate is bound by residues His123, 153 to 154 (RD), Arg185, Arg191, 261 to 264 (RPDR), and Lys336. The Mn(2+) site is built by Asp403, His407, Asp444, His445, and His462.

This sequence belongs to the BPG-independent phosphoglycerate mutase family. Monomer. It depends on Mn(2+) as a cofactor.

It carries out the reaction (2R)-2-phosphoglycerate = (2R)-3-phosphoglycerate. It participates in carbohydrate degradation; glycolysis; pyruvate from D-glyceraldehyde 3-phosphate: step 3/5. Essential for rapid growth and for sporulation. Catalyzes the interconversion of 2-phosphoglycerate and 3-phosphoglycerate. In Bacillus velezensis (strain DSM 23117 / BGSC 10A6 / LMG 26770 / FZB42) (Bacillus amyloliquefaciens subsp. plantarum), this protein is 2,3-bisphosphoglycerate-independent phosphoglycerate mutase.